The chain runs to 140 residues: Zinc finger SWIM domain-containing protein 7 (140 aa).

The SWIM-type zinc finger occupies Tyr-66 to Val-114.

Belongs to the SWS1 family. As to quaternary structure, interacts with RAD51D and XRCC3; involved in homologous recombination repair. Interacts with SWSAP1; they form a functional complex involved in homologous recombination repair and stabilize each other. As to expression, expressed in ovary and testis.

Its subcellular location is the nucleus. In terms of biological role, involved in early stages of the homologous recombination repair (HRR) pathway of double-stranded DNA breaks arising during DNA replication or induced by DNA-damaging agents. Required for meiotic progression, hence for fertility. In Homo sapiens (Human), this protein is Zinc finger SWIM domain-containing protein 7 (ZSWIM7).